The primary structure comprises 230 residues: Fibrillarin-like rRNA/tRNA 2'-O-methyltransferase (230 aa).

S-adenosyl-L-methionine contacts are provided by residues 87–88 (TT), 105–106 (EF), 130–131 (DA), and 150–153 (DVAQ).

Belongs to the methyltransferase superfamily. Fibrillarin family. As to quaternary structure, interacts with nop5. Component of box C/D small ribonucleoprotein (sRNP) particles that contain rpl7ae, FlpA and nop5, plus a guide RNA.

Its function is as follows. Involved in pre-rRNA and tRNA processing. Utilizes the methyl donor S-adenosyl-L-methionine to catalyze the site-specific 2'-hydroxyl methylation of ribose moieties in rRNA and tRNA. Site specificity is provided by a guide RNA that base pairs with the substrate. Methylation occurs at a characteristic distance from the sequence involved in base pairing with the guide RNA. The chain is Fibrillarin-like rRNA/tRNA 2'-O-methyltransferase from Methanococcus maripaludis (strain DSM 14266 / JCM 13030 / NBRC 101832 / S2 / LL).